Reading from the N-terminus, the 341-residue chain is tRNA N6-adenosine threonylcarbamoyltransferase (341 aa).

Residues His-111 and His-115 each coordinate Fe cation. Residues 134-138, Asp-167, Gly-180, and Asn-270 contribute to the substrate site; that span reads LVSGG. A Fe cation-binding site is contributed by Asp-298.

The protein belongs to the KAE1 / TsaD family. Requires Fe(2+) as cofactor.

The protein resides in the cytoplasm. The catalysed reaction is L-threonylcarbamoyladenylate + adenosine(37) in tRNA = N(6)-L-threonylcarbamoyladenosine(37) in tRNA + AMP + H(+). In terms of biological role, required for the formation of a threonylcarbamoyl group on adenosine at position 37 (t(6)A37) in tRNAs that read codons beginning with adenine. Is involved in the transfer of the threonylcarbamoyl moiety of threonylcarbamoyl-AMP (TC-AMP) to the N6 group of A37, together with TsaE and TsaB. TsaD likely plays a direct catalytic role in this reaction. The chain is tRNA N6-adenosine threonylcarbamoyltransferase from Thiobacillus denitrificans (strain ATCC 25259 / T1).